Consider the following 432-residue polypeptide: Peptidase B (432 aa).

Mn(2+) contacts are provided by lysine 196 and aspartate 201. Lysine 208 is a catalytic residue. Residues aspartate 219, aspartate 278, and glutamate 280 each contribute to the Mn(2+) site. Arginine 282 is an active-site residue.

Belongs to the peptidase M17 family. Homohexamer. It depends on Mn(2+) as a cofactor.

It localises to the cytoplasm. The enzyme catalyses Release of an N-terminal amino acid, Xaa, from a peptide or arylamide. Xaa is preferably Glu or Asp but may be other amino acids, including Leu, Met, His, Cys and Gln.. Functionally, probably plays an important role in intracellular peptide degradation. The polypeptide is Peptidase B (Yersinia pseudotuberculosis serotype IB (strain PB1/+)).